Here is a 1624-residue protein sequence, read N- to C-terminus: ATP-binding cassette sub-family A member 9 (1624 aa).

The chain crosses the membrane as a helical span at residues 31 to 51; it reads LLEWLFSFLLVLFLYLFFSNL. N120 and N195 each carry an N-linked (GlcNAc...) asparagine glycan. 6 helical membrane-spanning segments follow: residues 221–243, 269–289, 300–320, 329–349, 354–374, and 398–418; these read VATD…YVSV, SWGL…ALIV, FVMV…LAFL, FLTG…GFPA, LPAF…TVGM, and LIIA…VLTL. The ABC transporter 1 domain occupies 481 to 716; sequence IRIKNLKKEY…WGIGYHLSLH (236 aa). 517–524 serves as a coordination point for ATP; it reads GHSGAGKT. Residues 864–884 traverse the membrane as a helical segment; it reads LWTILLLFGISFIPQLLEHLF. Residue N949 is glycosylated (N-linked (GlcNAc...) asparagine). 6 helical membrane-spanning segments follow: residues 1026–1046, 1065–1085, 1108–1128, 1136–1156, 1163–1183, and 1200–1220; these read TFFW…SSIG, AYWF…LLLM, ILCS…ISFI, SGIW…ATDL, GLFF…LFIF, and EIVY…LFIL. The ABC transporter 2 domain maps to 1288-1521; it reads LRKEYAGKKK…FGKDYLLEMK (234 aa). 1326-1333 is an ATP binding site; it reads GHNGAGKS.

It belongs to the ABC transporter superfamily. ABCA family. As to expression, widely expressed with higher expression in heart.

The protein localises to the membrane. Functionally, transporter that may play a role in monocyte differentiation and lipid transport and homeostasis. The chain is ATP-binding cassette sub-family A member 9 (ABCA9) from Homo sapiens (Human).